The sequence spans 230 residues: Cutinase 1 (230 aa).

Residues Met1–Ala16 form the signal peptide. Residues Leu17–Leu31 constitute a propeptide that is removed on maturation. An N-D-glucuronoyl glycine modification is found at Gly32. Cysteines 47 and 125 form a disulfide. Catalysis depends on Ser136, which acts as the Nucleophile. Cys187 and Cys194 are oxidised to a cystine. Residue Asp191 is part of the active site. His204 serves as the catalytic Proton donor/acceptor.

The protein belongs to the cutinase family. In terms of processing, the 2 disulfide bonds play a critical role in holding the catalytic residues in juxta-position; reduction of the disulfide bridges results in the complete inactivation of the enzyme. Post-translationally, O-glycosylated; contains one mole each of mannose, arabinose, N-acetylglucosamine, and glucuronic acid.

The protein localises to the secreted. The catalysed reaction is cutin + H2O = cutin monomers.. With respect to regulation, inhibited by n-undecyl phosphonate (C11Y4). Inhibited by paraoxon. Functionally, catalyzes the hydrolysis of complex carboxylic polyesters found in the cell wall of plants. Degrades cutin, a macromolecule that forms the structure of the plant cuticle. Allows pathogenic fungi to penetrate through the cuticular barrier into the host plant during the initial stage of fungal infection. The protein is Cutinase 1 (CUT1) of Fusarium vanettenii (Neocosmospora pisi).